Here is a 363-residue protein sequence, read N- to C-terminus: Aminomethyltransferase (363 aa).

The protein belongs to the GcvT family. As to quaternary structure, the glycine cleavage system is composed of four proteins: P, T, L and H.

It carries out the reaction N(6)-[(R)-S(8)-aminomethyldihydrolipoyl]-L-lysyl-[protein] + (6S)-5,6,7,8-tetrahydrofolate = N(6)-[(R)-dihydrolipoyl]-L-lysyl-[protein] + (6R)-5,10-methylene-5,6,7,8-tetrahydrofolate + NH4(+). Functionally, the glycine cleavage system catalyzes the degradation of glycine. This is Aminomethyltransferase from Nitrosomonas eutropha (strain DSM 101675 / C91 / Nm57).